The following is a 242-amino-acid chain: Coat protein (242 aa).

The segment covering 1-16 has biased composition (pro residues); the sequence is MGDQPRPPVPPAPGSN. Disordered stretches follow at residues 1–41 and 219–242; these read MGDQ…VANQ and SNST…GPDA. The segment covering 219-232 has biased composition (polar residues); the sequence is SNSTLLTKGASRST.

It belongs to the potexvirus capsid protein family.

The protein resides in the virion. Its function is as follows. Required for genome encapsidation. Forms ribonucleoprotein complexes along with TGB1 helicase and viral RNA. The polypeptide is Coat protein (Strawberry mild yellow edge-associated virus (SMYEaV)).